The chain runs to 181 residues: Caltractin ICL1a (181 aa).

The tract at residues 1–29 (MARRGQQPPPQQAPPAQKNQPGKFNPAEF) is disordered. The span at 14-23 (PPAQKNQPGK) shows a compositional bias: low complexity. EF-hand domains are found at residues 37–72 (EEVL…LGFE), 73–108 (AKNQ…RISE), 110–145 (DSKA…LGET), and 146–181 (MDDS…KTFA). Ca(2+)-binding residues include D50, D52, T54, S56, E61, D86, D88, S90, Q92, and E97.

This sequence belongs to the centrin family. As to quaternary structure, monomer.

It is found in the cytoplasm. The protein resides in the cytoskeleton. Functionally, plays a fundamental role in microtubule organizing center structure and function. Component of the infraciliary lattice (ICL) and the ciliary basal bodies. This Paramecium tetraurelia protein is Caltractin ICL1a (Icl1a).